We begin with the raw amino-acid sequence, 138 residues long: Small ribosomal subunit protein uS11c (138 aa).

The interval 1–22 is disordered; sequence MTKPIPRIGSRRSGRIGSRKAG. Over residues 9-22 the composition is skewed to basic residues; sequence GSRRSGRIGSRKAG.

Belongs to the universal ribosomal protein uS11 family. In terms of assembly, part of the 30S ribosomal subunit.

The protein resides in the plastid. It is found in the chloroplast. In Piper cenocladum (Ant piper), this protein is Small ribosomal subunit protein uS11c.